Reading from the N-terminus, the 180-residue chain is Ribosome maturation factor RimM (180 aa).

Residues 99–179 (NNEYYWKDIV…IVIKNWKQTF (81 aa)) enclose the PRC barrel domain.

Belongs to the RimM family. In terms of assembly, binds ribosomal protein uS19.

The protein resides in the cytoplasm. Functionally, an accessory protein needed during the final step in the assembly of 30S ribosomal subunit, possibly for assembly of the head region. Essential for efficient processing of 16S rRNA. May be needed both before and after RbfA during the maturation of 16S rRNA. It has affinity for free ribosomal 30S subunits but not for 70S ribosomes. This is Ribosome maturation factor RimM from Buchnera aphidicola subsp. Baizongia pistaciae (strain Bp).